Consider the following 462-residue polypeptide: Alanine racemase (462 aa).

Residue K34 is the Proton acceptor; specific for D-alanine of the active site. Position 34 is an N6-(pyridoxal phosphate)lysine (K34). The tract at residues 73–132 (ASWHESVFRHCEKNYTVIRRSNPVKNSVSQNFFNYFSGLQQCFAPRNDGSSIHATTPKAL) is unknown insert. R193 is a substrate binding site. The RPE1 insert domain occupies 286–332 (DLSNNLSYKEEFEGDTERRTAAYINVREDSSTGSTYKLPLEGGYSRG). Residue Y357 is the Proton acceptor; specific for L-alanine of the active site. Substrate is bound at residue M405.

This sequence belongs to the alanine racemase family. Pyridoxal 5'-phosphate is required as a cofactor.

The catalysed reaction is L-alanine = D-alanine. The protein operates within amino-acid biosynthesis; D-alanine biosynthesis; D-alanine from L-alanine: step 1/1. In terms of biological role, catalyzes the interconversion of L-alanine and D-alanine. May also act on other amino acids. This is Alanine racemase (alr) from Rickettsia felis (strain ATCC VR-1525 / URRWXCal2) (Rickettsia azadi).